The primary structure comprises 317 residues: Acetyl-coenzyme A carboxylase carboxyl transferase subunit alpha (317 aa).

A CoA carboxyltransferase C-terminal domain is found at 39 to 293; it reads KLEGKAQEAL…GNAIAEAMGS (255 aa).

Belongs to the AccA family. As to quaternary structure, acetyl-CoA carboxylase is a heterohexamer composed of biotin carboxyl carrier protein (AccB), biotin carboxylase (AccC) and two subunits each of ACCase subunit alpha (AccA) and ACCase subunit beta (AccD).

It is found in the cytoplasm. It carries out the reaction N(6)-carboxybiotinyl-L-lysyl-[protein] + acetyl-CoA = N(6)-biotinyl-L-lysyl-[protein] + malonyl-CoA. Its pathway is lipid metabolism; malonyl-CoA biosynthesis; malonyl-CoA from acetyl-CoA: step 1/1. In terms of biological role, component of the acetyl coenzyme A carboxylase (ACC) complex. First, biotin carboxylase catalyzes the carboxylation of biotin on its carrier protein (BCCP) and then the CO(2) group is transferred by the carboxyltransferase to acetyl-CoA to form malonyl-CoA. The protein is Acetyl-coenzyme A carboxylase carboxyl transferase subunit alpha of Azorhizobium caulinodans (strain ATCC 43989 / DSM 5975 / JCM 20966 / LMG 6465 / NBRC 14845 / NCIMB 13405 / ORS 571).